A 597-amino-acid polypeptide reads, in one-letter code: Protein disulfide isomerase-like 1-4 (597 aa).

An N-terminal signal peptide occupies residues 1 to 25; it reads MAFRVLLLFSLTALLIFSAVSPSFA. 2 stretches are compositionally biased toward acidic residues: residues 37–49 and 61–84; these read LSFL…DDVP and DEFE…EGDF. Residues 37 to 101 form a disordered region; sequence LSFLEDLKED…SDPLPTPEID (65 aa). In terms of domain architecture, Thioredoxin 1 spans 85 to 208; it reads SDLGNPDSDP…IVTWVKKKIG (124 aa). N-linked (GlcNAc...) asparagine glycosylation occurs at Asn112. Catalysis depends on nucleophile residues Cys132 and Cys135. Cys132 and Cys135 are joined by a disulfide. N-linked (GlcNAc...) asparagine glycosylation is found at Asn213 and Asn342. In terms of domain architecture, Thioredoxin 2 spans 429–550; the sequence is FYKSDPIPEK…FYKFLRKHAT (122 aa). Residues Cys471 and Cys474 each act as nucleophile in the active site. Cys471 and Cys474 are joined by a disulfide. Asn524 is a glycosylation site (N-linked (GlcNAc...) asparagine). The tract at residues 555–597 is disordered; that stretch reads LEKPASTESPKTAESTPKVETTETKESPDSTTKSSQSDSKDEL. The span at 560–573 shows a compositional bias: polar residues; sequence STESPKTAESTPKV. Positions 594 to 597 match the Prevents secretion from ER motif; it reads KDEL.

This sequence belongs to the protein disulfide isomerase family. Interacts with MEE8 and MED37A. Expressed in germinating seedling, including the cotyledons and hypocotyl, in vascular tissues, in pollen grains, root tips, leaf trichomes, developing seeds and siliques.

Its subcellular location is the endoplasmic reticulum lumen. The protein localises to the golgi apparatus. It is found in the vacuole. The protein resides in the nucleus. It localises to the secreted. Its subcellular location is the cell wall. The enzyme catalyses Catalyzes the rearrangement of -S-S- bonds in proteins.. Functionally, acts as a protein-folding catalyst that interacts with nascent polypeptides to catalyze the formation, isomerization, and reduction or oxidation of disulfide bonds. This is Protein disulfide isomerase-like 1-4 (PDIL1-4) from Arabidopsis thaliana (Mouse-ear cress).